The primary structure comprises 337 residues: U11/U12 small nuclear ribonucleoprotein 48 kDa protein (337 aa).

The CHHC U11-48K-type zinc-finger motif lies at 55 to 82 (IAICPYDSNHRMPKSSLTKHMESCRLRK). Zn(2+)-binding residues include Cys-58, His-64, His-74, and Cys-78. Glycyl lysine isopeptide (Lys-Gly) (interchain with G-Cter in SUMO2) cross-links involve residues Lys-87 and Lys-104. Over residues 255 to 276 (HWQEEQGRAGDAAEKNEERRSA) the composition is skewed to basic and acidic residues. The interval 255–337 (HWQEEQGRAG…HSHKRRKQKI (83 aa)) is disordered. Residues 294–310 (RHRRARSRSPHKRKRNK) are compositionally biased toward basic residues. Over residues 311-326 (DKSSESRRRKERDGER) the composition is skewed to basic and acidic residues. The span at 327 to 337 (HHSHKRRKQKI) shows a compositional bias: basic residues.

In terms of assembly, component of the U11/U12 snRNPs that are part of the U12-type spliceosome. Not found in the major spliceosome.

The protein resides in the nucleus. In terms of biological role, likely involved in U12-type 5' splice site recognition. The chain is U11/U12 small nuclear ribonucleoprotein 48 kDa protein (Snrnp48) from Mus musculus (Mouse).